The sequence spans 295 residues: Acetyl-coenzyme A carboxylase carboxyl transferase subunit beta (295 aa).

The disordered stretch occupies residues 1 to 20; sequence MSWLSKLMPSGIRTENTPAK. Positions 28-295 constitute a CoA carboxyltransferase N-terminal domain; that stretch reads LWEKCSNCGS…QPHPQDADAA (268 aa). Residues Cys32, Cys35, Cys51, and Cys54 each coordinate Zn(2+). The segment at 32–54 adopts a C4-type zinc-finger fold; that stretch reads CSNCGSALYGPELEENLEVCPKC.

It belongs to the AccD/PCCB family. In terms of assembly, acetyl-CoA carboxylase is a heterohexamer composed of biotin carboxyl carrier protein (AccB), biotin carboxylase (AccC) and two subunits each of ACCase subunit alpha (AccA) and ACCase subunit beta (AccD). Requires Zn(2+) as cofactor.

It is found in the cytoplasm. The catalysed reaction is N(6)-carboxybiotinyl-L-lysyl-[protein] + acetyl-CoA = N(6)-biotinyl-L-lysyl-[protein] + malonyl-CoA. Its pathway is lipid metabolism; malonyl-CoA biosynthesis; malonyl-CoA from acetyl-CoA: step 1/1. Functionally, component of the acetyl coenzyme A carboxylase (ACC) complex. Biotin carboxylase (BC) catalyzes the carboxylation of biotin on its carrier protein (BCCP) and then the CO(2) group is transferred by the transcarboxylase to acetyl-CoA to form malonyl-CoA. This Xanthomonas oryzae pv. oryzae (strain MAFF 311018) protein is Acetyl-coenzyme A carboxylase carboxyl transferase subunit beta.